The chain runs to 193 residues: dCTP deaminase (193 aa).

Residues 110 to 115, Asp-128, 136 to 138, Tyr-171, Lys-178, and Gln-182 contribute to the dCTP site; these read RSSLAR and VLE. Glu-138 (proton donor/acceptor) is an active-site residue. Residues 174 to 193 form a disordered region; it reads RKSAKYKDQQEAVASRISQD.

It belongs to the dCTP deaminase family. As to quaternary structure, homotrimer.

It catalyses the reaction dCTP + H2O + H(+) = dUTP + NH4(+). The protein operates within pyrimidine metabolism; dUMP biosynthesis; dUMP from dCTP (dUTP route): step 1/2. In terms of biological role, catalyzes the deamination of dCTP to dUTP. The polypeptide is dCTP deaminase (Shewanella baltica (strain OS223)).